A 194-amino-acid polypeptide reads, in one-letter code: Large ribosomal subunit protein eL15 (194 aa).

Residues 162 to 173 (KTSAGRRARGLH) show a composition bias toward basic residues. Positions 162-194 (KTSAGRRARGLHNRGTGTEKCRPSLTSHKNQGK) are disordered. The span at 185 to 194 (SLTSHKNQGK) shows a compositional bias: polar residues.

This sequence belongs to the eukaryotic ribosomal protein eL15 family.

The sequence is that of Large ribosomal subunit protein eL15 from Methanocorpusculum labreanum (strain ATCC 43576 / DSM 4855 / Z).